The following is a 102-amino-acid chain: Iron-sulfur cluster assembly protein CyaY (102 aa).

The protein belongs to the frataxin family.

Functionally, involved in iron-sulfur (Fe-S) cluster assembly. May act as a regulator of Fe-S biogenesis. This chain is Iron-sulfur cluster assembly protein CyaY, found in Mannheimia succiniciproducens (strain KCTC 0769BP / MBEL55E).